Here is a 203-residue protein sequence, read N- to C-terminus: MIDRLVRDSRGPVTERNPPHMSLSAGPAEISEGLDNQRTLGVSPLISPALLRQELPVDAAIAKTVAHGRSSAVDILHGDDDRLIVVVGPCSVHDPAAALDYAHRLAEHAAGVRDELHVIMRVYFEKPRTTLGWKGLINDPDLDGSYAVNKGLRMARKLLLDISALGLPVGCEFLDPITPQFIADTVSWGSIGARTAASQVHRQ.

Positions 1-10 (MIDRLVRDSR) are enriched in basic and acidic residues. The interval 1–28 (MIDRLVRDSRGPVTERNPPHMSLSAGPA) is disordered.

It belongs to the class-I DAHP synthase family.

It catalyses the reaction D-erythrose 4-phosphate + phosphoenolpyruvate + H2O = 7-phospho-2-dehydro-3-deoxy-D-arabino-heptonate + phosphate. It participates in metabolic intermediate biosynthesis; chorismate biosynthesis; chorismate from D-erythrose 4-phosphate and phosphoenolpyruvate: step 1/7. Its function is as follows. Stereospecific condensation of phosphoenolpyruvate (PEP) and D-erythrose-4-phosphate (E4P) giving rise to 3-deoxy-D-arabino-heptulosonate-7-phosphate (DAHP). This is Phospho-2-dehydro-3-deoxyheptonate aldolase (aroA) from Amycolatopsis methanolica.